Reading from the N-terminus, the 1472-residue chain is MARLAAVLWSLCVTAILVTSATQGLSRAGLPFGLMRRELACEGYPIELRCPGSDVIMVENANYGRTDDKICDADPFQMENVQCYLPDAFKIMSQRCNNRTQCVVVAGSDAFPDPCPGTYKYLEVQYDCVPYKVKQKVFVCPGTLQKVLEPTSTHESEHQSGAWCKDPLQAGDRIYVMPWIPYRTDTLTEYASWEDYVAARHTTTYRLPNRVDGTGFVVYDGAVFYNKERTRNIVKYDLRTRIKSGETVINTANYHDTSPYRWGGKTDIDLAVDENGLWVIYATEGNNGRLVVSQLNPYTLRFEGTWETGYDKRSASNAFMVCGVLYVLRSVYVDDDSEAAGNRVDYAFNTNANREEPVSLAFPNPYQFVSSVDYNPRDNQLYVWNNYFVVRYSLEFGPPDPSAGPATSPPLSTTTTARPTPLTSTASPAATTPLRRAPLTTHPVGAINQLGPDLPPATAPAPSTRRPPAPNLHVSPELFCEPREVRRVQWPATQQGMLVERPCPKGTRGIASFQCLPALGLWNPRGPDLSNCTSPWVNQVAQKIKSGENAANIASELARHTRGSIYAGDVSSSVKLMEQLLDILDAQLQALRPIERESAGKNYNKMHKRERTCKDYIKAVVETVDNLLRPEALESWKDMNATEQAHTATMLLDVLEEGAFLLADNVREPARFLAAKQNVVLEVTVLNTEGQVQELVFPQEYPSENSIQLSANTIKQNSRNGVVKVVFILYNNLGLFLSTENATVKLAGEAGSGGPGGASLVVNSQVIAASINKESSRVFLMDPVIFTVAHLEAKNHFNANCSFWNYSERSMLGYWSTQGCRLVESNKTHTTCACSHLTNFAVLMAHREIYQGRINELLLSVITWVGIVISLVCLAICISTFCFLRGLQTDRNTIHKNLCINLFLAELLFLVGIDKTQYEIACPIFAGLLHYFFLAAFSWLCLEGVHLYLLLVEVFESEYSRTKYYYLGGYCFPALVVGIAAAIDYRSYGTEKACWLRVDNYFIWSFIGPVSFVIVVNLVFLMVTLHKMVRSSSVLKPDSSRLDNIKSWALGAIALLFLLGLTWAFGLLFINKESVVMAYLFTTFNAFQGVFIFVFHCALQKKVHKEYSKCLRHSYCCIRSPPGGAHGSLKTSAMRSNARYYTGTQSRIRRMWNDTVRKQTESSFMAGDINSTPTLNRGTMGNHLLTNPVLQPRGGTSPYNTLIAESVGFNPSSPPVFNSPGSYREPKHPLGGREACGMDTLPLNGNFNNSYSLRSGDFPPGDGAPEPPRGRNLADAAAFEKMIISELVHNNLRGGSSGAKGPPPPEPPVPPVPGGSGEEEAGGPGADRAEIELLYKALEEPLLLPRAQSVLYQSDLDESESCTAEDGATSRPLSSPPGRDSLYASGANLRDSPSYPDSSPEGPSEALPPPPPAPPGPPEIYYTSRPPALVARNPLQGYYQVRRPSHEGYLAAPGLEGPGPDGDGQMQLVTSL.

The first 24 residues, 1–24 (MARLAAVLWSLCVTAILVTSATQG), serve as a signal peptide directing secretion. Residues 25 to 857 (LSRAGLPFGL…EIYQGRINEL (833 aa)) lie on the Extracellular side of the membrane. The region spanning 40–129 (ACEGYPIELR…KYLEVQYDCV (90 aa)) is the SUEL-type lectin domain. Cystine bridges form between cysteine 41-cysteine 71, cysteine 50-cysteine 128, cysteine 83-cysteine 115, cysteine 96-cysteine 102, and cysteine 140-cysteine 322. Glutamate 42 serves as a coordination point for alpha-L-rhamnose. Residue asparagine 98 is glycosylated (N-linked (GlcNAc...) asparagine). Alpha-L-rhamnose is bound at residue 117 to 120 (GTYK). Positions 139 to 398 (VCPGTLQKVL…VVRYSLEFGP (260 aa)) constitute an Olfactomedin-like domain. The disordered stretch occupies residues 400–468 (DPSAGPATSP…APAPSTRRPP (69 aa)). A compositionally biased stretch (low complexity) spans 405–441 (PATSPPLSTTTTARPTPLTSTASPAATTPLRRAPLTT). A compositionally biased stretch (pro residues) spans 453–468 (DLPPATAPAPSTRRPP). 2 disulfide bridges follow: cysteine 480–cysteine 515 and cysteine 503–cysteine 532. Residues asparagine 531, asparagine 640, asparagine 741, asparagine 800, asparagine 805, and asparagine 826 are each glycosylated (N-linked (GlcNAc...) asparagine). Residues 669–850 (PARFLAAKQN…AVLMAHREIY (182 aa)) form the GAIN-B domain. 2 disulfide bridges follow: cysteine 801–cysteine 832 and cysteine 820–cysteine 834. Residues 801–850 (CSFWNYSERSMLGYWSTQGCRLVESNKTHTTCACSHLTNFAVLMAHREIY) are GPS. The helical transmembrane segment at 858 to 878 (LLSVITWVGIVISLVCLAICI) threads the bilayer. Over 879–892 (STFCFLRGLQTDRN) the chain is Cytoplasmic. A helical membrane pass occupies residues 893-913 (TIHKNLCINLFLAELLFLVGI). Residues 914–919 (DKTQYE) are Extracellular-facing. Residues 920-940 (IACPIFAGLLHYFFLAAFSWL) form a helical membrane-spanning segment. Over 941–963 (CLEGVHLYLLLVEVFESEYSRTK) the chain is Cytoplasmic. The chain crosses the membrane as a helical span at residues 964-984 (YYYLGGYCFPALVVGIAAAID). Residues 985 to 1001 (YRSYGTEKACWLRVDNY) lie on the Extracellular side of the membrane. Residues 1002 to 1022 (FIWSFIGPVSFVIVVNLVFLM) traverse the membrane as a helical segment. Residues 1023–1049 (VTLHKMVRSSSVLKPDSSRLDNIKSWA) are Cytoplasmic-facing. A helical membrane pass occupies residues 1050 to 1070 (LGAIALLFLLGLTWAFGLLFI). Over 1071–1074 (NKES) the chain is Extracellular. The chain crosses the membrane as a helical span at residues 1075–1095 (VVMAYLFTTFNAFQGVFIFVF). The Cytoplasmic portion of the chain corresponds to 1096–1472 (HCALQKKVHK…DGQMQLVTSL (377 aa)). Arginine 1193 carries the post-translational modification Omega-N-methylarginine. Serine 1219 carries the phosphoserine modification. Disordered stretches follow at residues 1247-1271 (FNNSYSLRSGDFPPGDGAPEPPRGR), 1291-1325 (NLRGGSSGAKGPPPPEPPVPPVPGGSGEEEAGGPG), 1358-1427 (ESES…SRPP), and 1449-1472 (YLAAPGLEGPGPDGDGQMQLVTSL). Pro residues-rich tracts occupy residues 1301–1313 (GPPPPEPPVPPVP) and 1406–1418 (ALPPPPPAPPGPP). The residue at position 1471 (serine 1471) is a Phosphoserine.

This sequence belongs to the G-protein coupled receptor 2 family. Adhesion G-protein coupled receptor (ADGR) subfamily. Forms a heterodimer, consisting of a large extracellular region (p120) non-covalently linked to a seven-transmembrane moiety (p85). Interacts with syntaxin and with proteins of the SHANK family via the PDZ domain. Interacts (via extracellular domain) with FLRT1, FLRT2 and FLRT3 (via extracellular domain). In terms of processing, autoproteolytically cleaved into 2 subunits, an extracellular subunit and a seven-transmembrane subunit. This proteolytic processing takes place early in the biosynthetic pathway, either in the endoplasmic reticulum or in the early compartment of the Golgi apparatus. In terms of tissue distribution, brain-specific expression but low levels are also detected in kidney, lung and spleen.

It is found in the cell membrane. It localises to the cell projection. The protein resides in the axon. The protein localises to the growth cone. Its subcellular location is the synapse. It is found in the presynaptic cell membrane. It localises to the synaptosome. Functionally, calcium-independent receptor of high affinity for alpha-latrotoxin, an excitatory neurotoxin present in black widow spider venom which triggers massive exocytosis from neurons and neuroendocrine cells. Receptor for TENM2 that mediates heterophilic synaptic cell-cell contact and postsynaptic specialization. Receptor probably implicated in the regulation of exocytosis. The sequence is that of Adhesion G protein-coupled receptor L1 from Bos taurus (Bovine).